We begin with the raw amino-acid sequence, 397 residues long: 42.8 kDa protein in whiE locus (397 aa).

The interval 1 to 22 (MTVSPVVATDAPSTDATRTTAT) is disordered. Over residues 8–22 (ATDAPSTDATRTTAT) the composition is skewed to low complexity. Positions 46 to 137 (VRVVLMLDVH…DTHSLRYSVL (92 aa)) constitute an ABM domain.

This sequence belongs to the SchA/CurD family.

The chain is 42.8 kDa protein in whiE locus from Streptomyces coelicolor (strain ATCC BAA-471 / A3(2) / M145).